A 272-amino-acid chain; its full sequence is uncharacterized protein (272 aa).

2 stretches are compositionally biased toward basic and acidic residues: residues Val136–Ile156 and Gly231–Pro240. Disordered stretches follow at residues Val136–His157 and Val174–Phe272. The span at Asp243–Pro252 shows a compositional bias: polar residues. Over residues Ser253–Phe272 the composition is skewed to low complexity.

This is an uncharacterized protein from Arabidopsis thaliana (Mouse-ear cress).